The primary structure comprises 467 residues: Asparagine--tRNA ligase (467 aa).

This sequence belongs to the class-II aminoacyl-tRNA synthetase family. In terms of assembly, homodimer.

Its subcellular location is the cytoplasm. It catalyses the reaction tRNA(Asn) + L-asparagine + ATP = L-asparaginyl-tRNA(Asn) + AMP + diphosphate + H(+). The protein is Asparagine--tRNA ligase of Histophilus somni (strain 129Pt) (Haemophilus somnus).